Reading from the N-terminus, the 388-residue chain is Methylthioribose-1-phosphate isomerase (388 aa).

The Proton donor role is filled by Asp-258.

The protein belongs to the eIF-2B alpha/beta/delta subunits family. MtnA subfamily.

It is found in the cytoplasm. The protein resides in the nucleus. The enzyme catalyses 5-(methylsulfanyl)-alpha-D-ribose 1-phosphate = 5-(methylsulfanyl)-D-ribulose 1-phosphate. The protein operates within amino-acid biosynthesis; L-methionine biosynthesis via salvage pathway; L-methionine from S-methyl-5-thio-alpha-D-ribose 1-phosphate: step 1/6. Functionally, catalyzes the interconversion of methylthioribose-1-phosphate (MTR-1-P) into methylthioribulose-1-phosphate (MTRu-1-P). The chain is Methylthioribose-1-phosphate isomerase (mri-1) from Neurospora crassa (strain ATCC 24698 / 74-OR23-1A / CBS 708.71 / DSM 1257 / FGSC 987).